We begin with the raw amino-acid sequence, 271 residues long: MSTTVIGSWADAGDEFSAPDITTNPDGTKTVITYRTNQDGKKVKITQKIKEVKVQERVHPLIAQRKNWKKYGKESKSPPGPDTSTTQLGEKVELKLGTSWKQQEKEEEEEKAENRAQKLSVQTIRCRTCGGDHYTSKCPFKDTLGATTSSPAAESGAGDNGPGKYVPRHLRADANGNLPSKEGRDDSTTLKVSQLNSFVDEDMLRNELFARFGPLQRVTLVRNRETGDSRGFAYVSFITEDMAQRALDALNGKGYHSLILHLEWSKKKKTV.

Disordered regions lie at residues 1–26 (MSTT…TNPD), 63–119 (AQRK…AQKL), and 147–187 (TTSS…RDDS). Ser-77 carries the post-translational modification Phosphoserine. In terms of domain architecture, RRM spans 188–267 (TTLKVSQLNS…LILHLEWSKK (80 aa)).

This sequence belongs to the eIF-3 subunit G family. As to quaternary structure, component of the eukaryotic translation initiation factor 3 (eIF-3) complex.

The protein resides in the cytoplasm. RNA-binding component of the eukaryotic translation initiation factor 3 (eIF-3) complex, which is involved in protein synthesis of a specialized repertoire of mRNAs and, together with other initiation factors, stimulates binding of mRNA and methionyl-tRNAi to the 40S ribosome. The eIF-3 complex specifically targets and initiates translation of a subset of mRNAs involved in cell proliferation. This subunit can bind 18S rRNA. The polypeptide is Eukaryotic translation initiation factor 3 subunit G (Scheffersomyces stipitis (strain ATCC 58785 / CBS 6054 / NBRC 10063 / NRRL Y-11545) (Yeast)).